The following is a 229-amino-acid chain: Transmembrane 4 L6 family member 20 (229 aa).

The Lumenal segment spans residues 1–14; the sequence is MTCCEGWTSCNGFS. A helical membrane pass occupies residues 15–35; the sequence is LLVLLLLGVVLNAIPLIVSLV. The Cytoplasmic segment spans residues 36–44; sequence EEDQFSQNP. Residues 45 to 65 form a helical membrane-spanning segment; sequence ISCFEWWFPGIIGAGLMAIPA. Over 66-83 the chain is Lumenal; sequence TTMSLTARKRACCNNRTG. A helical membrane pass occupies residues 84 to 104; it reads MFLSSLFSVITVIGALYCMLI. The Cytoplasmic segment spans residues 105-185; that stretch reads SIQALLKGPL…HFDSEENKHR (81 aa). Residues 186-206 traverse the membrane as a helical segment; sequence LIHFSVFLGLLLVGILEVLFG. The Lumenal segment spans residues 207 to 229; sequence LSQIVIGFLGCLCGVSKRRSQIV.

This sequence belongs to the L6 tetraspanin family. Glycosylated at Asn-132, Asn-148 and Asn-163 in presence of ceramide which inverts the orientation of TM4SF20 in membranes exposing these residues to the endoplasmic reticulum lumen. In terms of processing, cleaved by signal peptidase at Ser-14 but the peptide does not act as a signal peptide. Cleavage is inhibited by ceramide which inverts the orientation of TM4SF20 in membranes exposing the N-terminus to the cytosol and not to the endoplasmic reticulum lumen. In terms of tissue distribution, expressed in the brain, with high levels in the parietal lobe, hippocampus, pons, white matter and cerebellum.

The protein resides in the membrane. Its subcellular location is the endoplasmic reticulum membrane. Its function is as follows. Polytopic transmembrane protein that inhibits regulated intramembrane proteolysis (RIP) of CREB3L1, inhibiting its activation and the induction of collagen synthesis. In response to ceramide, which alters TM4SF20 membrane topology, stimulates RIP activation of CREB3L1. Ceramide reverses the direction through which transmembrane helices are translocated into the endoplasmic reticulum membrane during translation of TM4SF20, this mechanism is called 'regulated alternative translocation' (RAT) and regulates the function of the transmembrane protein. The protein is Transmembrane 4 L6 family member 20 (TM4SF20) of Homo sapiens (Human).